A 250-amino-acid polypeptide reads, in one-letter code: MRNIKLIIEYDGTAYCGWQVQPNGRTVQEVLQEALAAMLGEKTPLHGSGRTDAGVHARGMVACFKTDKAMPLRAFREGLNCLLPGDIAVREACEVPLEFHPRFDAHAKHYRYTILLDDLRSPLSRLTVWRLKGKLDIQAMRAACAAFVGEHDFAAFRASNCAAKTTVRRIYSMDLVQEGCLLHLDVKGSGFLKNMVRIITGTLIEVGQGKKSVEDVARLLQGGDRQQNSGMTVPPQGLCLMQVYYQEKCD.

The Nucleophile role is filled by Asp52. A substrate-binding site is contributed by Tyr110.

The protein belongs to the tRNA pseudouridine synthase TruA family. Homodimer.

It carries out the reaction uridine(38/39/40) in tRNA = pseudouridine(38/39/40) in tRNA. Functionally, formation of pseudouridine at positions 38, 39 and 40 in the anticodon stem and loop of transfer RNAs. In Citrifermentans bemidjiense (strain ATCC BAA-1014 / DSM 16622 / JCM 12645 / Bem) (Geobacter bemidjiensis), this protein is tRNA pseudouridine synthase A.